A 1468-amino-acid polypeptide reads, in one-letter code: Centrosomal protein of 290 kDa (1468 aa).

Coiled coils occupy residues 1-25, 52-121, 172-292, 318-528, 559-592, 627-688, and 736-1441; these read ERQL…VGEK, SLSE…IEQA, KMYE…DEKA, VASK…EAQK, RIIL…ILSR, HTLK…QADN, and IKLK…SEQF. The self-association (with itself or N-terminus) stretch occupies residues 1060-1468; sequence TTGLTVDQVM…QENPVNFPIY (409 aa). Positions 1130 to 1152 are disordered; the sequence is LSKDAYSRPSTSGIDSDDHYQRE.

In terms of assembly, part of the tectonic-like complex (also named B9 complex). Interacts with ATF4 via its N-terminal region. Associates with the BBSome complex, interacting (via N-terminus) with BBS4. Interacts with IQCB1/NPHP5; IQCB1 and CEP290/NPHP6 are proposed to form a functional NPHP5-6 module localized to the centrosome. Interacts with NPHP4; the interaction likely requires additional interactors. Interacts with ZNF423, FAM161A, CEP162, CEP162, CEP131, TALPID3, CCDC13, CC2D2A, RPGRIP1. Can self-associate (homo- or heteromeric). Interacts with CCP110; required for suppressing cilia formation. Interacts with RPGR. Associates (via C-terminus) with microtubules; association to microtubule is reduced in response to cellular stress, such as ultraviolet light (UV) radiation or heat shock, in a process that requires p38 MAP kinase signaling. Interacts with FAM161A. Interacts with PCM1. Interacts with CCDC66. Interacts with ARMC9 and CSPP1. Ubiquitinated. May undergo monoubiquitination; monoubiquitination is inhibited in response to cellular stress, such as ultraviolet light (UV) radiation or heat shock, but does not cause its displacement from centriolar satellites.

It is found in the cytoplasm. The protein localises to the cytoskeleton. It localises to the microtubule organizing center. Its subcellular location is the centrosome. The protein resides in the centriolar satellite. It is found in the nucleus. The protein localises to the cell projection. It localises to the cilium. Its subcellular location is the cilium basal body. The protein resides in the centriole. It is found in the cytoplasmic vesicle. In terms of biological role, involved in early and late steps in cilia formation. Its association with CCP110 is required for inhibition of primary cilia formation by CCP110. May play a role in early ciliogenesis in the disappearance of centriolar satellites and in the transition of primary ciliar vesicles (PCVs) to capped ciliary vesicles (CCVs). Required for the centrosomal recruitment of RAB8A and for the targeting of centriole satellite proteins to centrosomes such as of PCM1. Required for the correct localization of ciliary and phototransduction proteins in retinal photoreceptor cells; may play a role in ciliary transport processes. Required for efficient recruitment of RAB8A to primary cilium. In the ciliary transition zone is part of the tectonic-like complex which is required for tissue-specific ciliogenesis and may regulate ciliary membrane composition. Involved in regulation of the BBSome complex integrity, specifically for presence of BBS2, BBS5 and BBS8/TTC8 in the complex, and in ciliary targeting of selected BBSome cargos. May play a role in controlling entry of the BBSome complex to cilia possibly implicating IQCB1/NPHP5. Activates ATF4-mediated transcription. The protein is Centrosomal protein of 290 kDa (CEP290) of Bos taurus (Bovine).